The chain runs to 232 residues: Probable fimbrial chaperone LpfB (232 aa).

The signal sequence occupies residues 1-24 (MDRMMKSKFVALALSLFLSQSVLA).

Belongs to the periplasmic pilus chaperone family.

It is found in the periplasm. Its function is as follows. Part of the lpfABCC'DE fimbrial operon. LP fimbriae may participate in the interaction with eukaryotic cells by assisting in microcolony formation. This Escherichia coli O157:H7 protein is Probable fimbrial chaperone LpfB (lpfB).